Consider the following 272-residue polypeptide: F-box protein PP2-B10 (272 aa).

Positions 11-57 (SSPFDSFPEDCISYIISFTNPRDACVAATVSKTFESTVKSDIIWEKF) constitute an F-box domain.

As to quaternary structure, part of a SCF (ASK-cullin-F-box) protein ligase complex. Interacts with SKP1B/ASK2, ASK11 and ASK12.

It functions in the pathway protein modification; protein ubiquitination. Component of SCF(ASK-cullin-F-box) E3 ubiquitin ligase complexes, which may mediate the ubiquitination and subsequent proteasomal degradation of target proteins. This Arabidopsis thaliana (Mouse-ear cress) protein is F-box protein PP2-B10 (PP2B10).